The chain runs to 508 residues: Hydroxymethylglutaryl-CoA synthase, mitochondrial (508 aa).

The N-terminal 37 residues, 1–37 (MQRLLTPVKRILQLTRAVQETSLTPARLLPVAHQRFS), are a transit peptide targeting the mitochondrion. Position 52 is an N6-succinyllysine (K52). Positions 80 and 81 each coordinate (3S)-3-hydroxy-3-methylglutaryl-CoA. K83 is subject to N6-acetyllysine; alternate. K83 is modified (N6-succinyllysine; alternate). E132 serves as the catalytic Proton donor/acceptor. (3S)-3-hydroxy-3-methylglutaryl-CoA-binding residues include C166, N204, and T208. C166 (acyl-thioester intermediate) is an active-site residue. An N6-succinyllysine modification is found at K221. N6-acetyllysine is present on K243. K256 bears the N6-acetyllysine; alternate mark. Position 256 is an N6-succinyllysine; alternate (K256). Residues S258 and H301 each contribute to the (3S)-3-hydroxy-3-methylglutaryl-CoA site. The active-site Proton donor/acceptor is H301. Position 306 is an N6-acetyllysine (K306). K310 provides a ligand contact to (3S)-3-hydroxy-3-methylglutaryl-CoA. N6-acetyllysine; alternate is present on K310. Residue K310 is modified to N6-succinyllysine; alternate. The residue at position 333 (K333) is an N6-succinyllysine. An N6-acetyllysine; alternate mark is found at K342, K350, K354, and K358. K342, K350, K354, and K358 each carry N6-succinyllysine; alternate. Residues N380 and S414 each coordinate (3S)-3-hydroxy-3-methylglutaryl-CoA. A Phosphoserine modification is found at S433. K437 carries the post-translational modification N6-acetyllysine. At S440 the chain carries Phosphoserine. At K447 the chain carries N6-acetyllysine; alternate. An N6-succinyllysine; alternate modification is found at K447. S456 is subject to Phosphoserine. Residue K473 is modified to N6-acetyllysine; alternate. K473 bears the N6-succinyllysine; alternate mark. Position 477 is a phosphoserine (S477).

The protein belongs to the thiolase-like superfamily. HMG-CoA synthase family. Homodimer. In terms of processing, succinylated. Desuccinylated by SIRT5. Succinylation, at least at Lys-83 and Lys-310, inhibits the enzymatic activity. As to expression, expression in liver is 200-fold higher than in any other tissue. Low expression in colon, kidney, testis, and pancreas. Very low expression in heart and skeletal muscle. Not detected in brain. In terms of tissue distribution, highest expression detected in heart and skeletal muscle.

It is found in the mitochondrion. It catalyses the reaction acetoacetyl-CoA + acetyl-CoA + H2O = (3S)-3-hydroxy-3-methylglutaryl-CoA + CoA + H(+). Its pathway is metabolic intermediate biosynthesis; (R)-mevalonate biosynthesis; (R)-mevalonate from acetyl-CoA: step 2/3. Its function is as follows. Catalyzes the first irreversible step in ketogenesis, condensing acetyl-CoA to acetoacetyl-CoA to form HMG-CoA, which is converted by HMG-CoA reductase (HMGCR) into mevalonate. This chain is Hydroxymethylglutaryl-CoA synthase, mitochondrial (HMGCS2), found in Homo sapiens (Human).